A 100-amino-acid chain; its full sequence is Small ribosomal subunit protein uS14c (100 aa).

The protein belongs to the universal ribosomal protein uS14 family. As to quaternary structure, part of the 30S ribosomal subunit.

The protein resides in the plastid. Its subcellular location is the chloroplast. Binds 16S rRNA, required for the assembly of 30S particles. The polypeptide is Small ribosomal subunit protein uS14c (Buxus microphylla (Littleleaf boxwood)).